A 282-amino-acid chain; its full sequence is RsbT co-antagonist protein RsbRC (282 aa).

Residues Ser-165 and Ser-174 each carry the phosphoserine modification. In terms of domain architecture, STAS spans 165-276; that stretch reads SAPVIVLFHS…STLASAIASD (112 aa). Thr-186 carries the phosphothreonine modification.

As to quaternary structure, probably present in the stressosome with RsbRA, RsbRB, RsbRD and RsbS. Post-translationally, phosphorylated by RsbT.

Its function is as follows. One of 4 functionally non-identical RsbR paralogs, it functions in the environmental signaling branch of the general stress response. Functionally, negative regulator of sigma-B activity. Non-phosphorylated RsbS binds to RsbT, preventing its association with RsbU. Requires any one of RsbRA, RsbRB, RsbRC or RsbRD to sequester RsbT. When RsbS and the RsbR paralog(s) are phosphorylated, they release RsbT, which can then bind and activate RsbU. In Bacillus subtilis (strain 168), this protein is RsbT co-antagonist protein RsbRC (rsbRC).